Here is a 142-residue protein sequence, read N- to C-terminus: Large ribosomal subunit protein uL13 (142 aa).

This sequence belongs to the universal ribosomal protein uL13 family. Part of the 50S ribosomal subunit.

Its function is as follows. This protein is one of the early assembly proteins of the 50S ribosomal subunit, although it is not seen to bind rRNA by itself. It is important during the early stages of 50S assembly. In Vesicomyosocius okutanii subsp. Calyptogena okutanii (strain HA), this protein is Large ribosomal subunit protein uL13.